The primary structure comprises 595 residues: Trafficking protein particle complex subunit 14 (595 aa).

Disordered regions lie at residues 84–111 and 494–513; these read ASVS…ECVE and SNPP…SSPA.

In terms of assembly, component of the multisubunit TRAPP II complex, which includes at least TRAPPC1, TRAPPC2, TRAPPC2L, TRAPPC3, TRAPPC4, TRAPPC5, TRAPPC6A/B, TRAPPC9, TRAPPC10 and TRAPPC14. TRAPPC9, TRAPPC10 and TRAPPC14 are specific subunits of the TRAPP II complex. Interacts with alpha-tubulin during mitosis.

It is found in the cytoplasm. The protein localises to the cytoskeleton. It localises to the spindle. Its subcellular location is the vesicle. The protein resides in the midbody. Specific subunit of the TRAPP (transport protein particle) II complex, a highly conserved vesicle tethering complex that functions in late Golgi trafficking as a membrane tether. TRAPP II complex also has GEF activity toward RAB1A. TRAPPC14 is required for ciliogenesis. This Danio rerio (Zebrafish) protein is Trafficking protein particle complex subunit 14 (trappc14).